Here is a 120-residue protein sequence, read N- to C-terminus: Large ribosomal subunit protein uL18 (120 aa).

It belongs to the universal ribosomal protein uL18 family. As to quaternary structure, part of the 50S ribosomal subunit; part of the 5S rRNA/L5/L18/L25 subcomplex. Contacts the 5S and 23S rRNAs.

Functionally, this is one of the proteins that bind and probably mediate the attachment of the 5S RNA into the large ribosomal subunit, where it forms part of the central protuberance. This chain is Large ribosomal subunit protein uL18, found in Methylocella silvestris (strain DSM 15510 / CIP 108128 / LMG 27833 / NCIMB 13906 / BL2).